Consider the following 214-residue polypeptide: Large ribosomal subunit protein bL25 (214 aa).

The interval 194–214 is disordered; that stretch reads TTEAEETAEPEVIRRKEEEEE. Over residues 204 to 214 the composition is skewed to basic and acidic residues; that stretch reads EVIRRKEEEEE.

The protein belongs to the bacterial ribosomal protein bL25 family. CTC subfamily. Part of the 50S ribosomal subunit; part of the 5S rRNA/L5/L18/L25 subcomplex. Contacts the 5S rRNA. Binds to the 5S rRNA independently of L5 and L18.

Its function is as follows. This is one of the proteins that binds to the 5S RNA in the ribosome where it forms part of the central protuberance. This chain is Large ribosomal subunit protein bL25, found in Thermotoga petrophila (strain ATCC BAA-488 / DSM 13995 / JCM 10881 / RKU-1).